Here is a 437-residue protein sequence, read N- to C-terminus: Phosphomethylpyrimidine synthase (437 aa).

Substrate contacts are provided by residues asparagine 69, methionine 98, tyrosine 127, histidine 163, 185 to 187 (SRG), 226 to 229 (DACR), and glutamate 265. Histidine 269 is a binding site for Zn(2+). Tyrosine 292 is a substrate binding site. Histidine 333 lines the Zn(2+) pocket. [4Fe-4S] cluster contacts are provided by cysteine 409, cysteine 412, and cysteine 416.

This sequence belongs to the ThiC family. It depends on [4Fe-4S] cluster as a cofactor.

It catalyses the reaction 5-amino-1-(5-phospho-beta-D-ribosyl)imidazole + S-adenosyl-L-methionine = 4-amino-2-methyl-5-(phosphooxymethyl)pyrimidine + CO + 5'-deoxyadenosine + formate + L-methionine + 3 H(+). It functions in the pathway cofactor biosynthesis; thiamine diphosphate biosynthesis. Functionally, catalyzes the synthesis of the hydroxymethylpyrimidine phosphate (HMP-P) moiety of thiamine from aminoimidazole ribotide (AIR) in a radical S-adenosyl-L-methionine (SAM)-dependent reaction. This Clostridium botulinum (strain 657 / Type Ba4) protein is Phosphomethylpyrimidine synthase.